The sequence spans 72 residues: MSNSMTKLTELREMSDEQLDATAKEAAETLFRLRFQSQSERLNTPSEIKKNRKTIARVKTIQTERQLAQPQA.

It belongs to the universal ribosomal protein uL29 family.

The chain is Large ribosomal subunit protein uL29 from Rhodopirellula baltica (strain DSM 10527 / NCIMB 13988 / SH1).